The sequence spans 1677 residues: ELMO domain-containing protein E (1677 aa).

14 disordered regions span residues 112-139 (TTTSSSSSSSSPSSSSSSSSSSSSSSPS), 168-194 (NSKDTNNSGTINNNNNNNNNSGGSNIK), 264-372 (QLHG…NTTE), 592-625 (DDDNDNNNNQELNNNNNNNNNNNYNIKTKPRSNS), 775-801 (PNSNNPTDNIITTNTNTTTTTTTSTNN), 888-947 (INKN…NQDI), 982-1002 (KIRSSSSTPDTSSPPLNSQPE), 1047-1075 (STNNHHIGGGGGGGSSDNLLSRSPEETRS), 1122-1141 (KQKSPKLQGGSGPWKKGNVS), 1197-1248 (NNNI…DNHA), 1261-1404 (DDDD…RKKR), 1434-1454 (SPGSYDAHLNNPHLSVSPQPE), 1467-1593 (KNPE…GDVS), and 1654-1677 (ESQRDLQHQASSSNLKFSLASSSK). 2 stretches are compositionally biased toward low complexity: residues 115-139 (SSSSSSSSPSSSSSSSSSSSSSSPS) and 172-194 (TNNSGTINNNNNNNNNSGGSNIK). Residues 269 to 278 (SIGGGGGGSG) show a composition bias toward gly residues. 3 stretches are compositionally biased toward low complexity: residues 307–334 (SQSNSPQSSSFVKSQQIQQQQQYQKPNN), 341–352 (TTTTTTTTTTTS), and 597–616 (NNNNQELNNNNNNNNNNNYN). The region spanning 492 to 710 (SHQILLSDLW…HTREIIEKVC (219 aa)) is the ELMO domain. Gly residues predominate over residues 891–903 (NGGGGGGGGGGGV). Residues 922-933 (IDDSDDENDNDE) show a composition bias toward acidic residues. Low complexity-rich tracts occupy residues 934 to 946 (VNNNNNSNRINQD) and 985 to 996 (SSSSTPDTSSPP). Residues 1186–1212 (LLDDVLDLNQTNNNIDNENDDINEAII) are a coiled coil. Over residues 1228–1238 (EEEEEEEEEEE) the composition is skewed to acidic residues. Low complexity predominate over residues 1285–1305 (NNTTTTTTTTTTTTTTTTNTT). Polar residues predominate over residues 1306 to 1334 (GQKRISILSTDTNRPGSSNYGESSLSNGS). Positions 1387–1397 (DDEDDEDDDDK) are enriched in acidic residues. Residues 1445-1454 (PHLSVSPQPE) show a composition bias toward polar residues. Low complexity-rich tracts occupy residues 1475–1488 (LSSSYDSSTSPLLS), 1503–1574 (SNLI…PSSS), and 1663–1677 (ASSSNLKFSLASSSK).

The protein is ELMO domain-containing protein E (elmoE) of Dictyostelium discoideum (Social amoeba).